A 192-amino-acid chain; its full sequence is MSKSSDRINLTNQFLIAMPNMADPTFSGTVVYLCDHSERGALGLVINRPTDIDLESLFNRIDLKLEIEPLLHIPVYFGGPVQTERGFVLHEPVEGSSYNSSMTVEGGLEMTTSKDVLEAVATGTGPKRFLLTLGHAGWGAGQLEEEISKNGWLTVAADPRIVFDTPAEERFEAALGLLGVSSSMLSGEAGHA.

The protein belongs to the UPF0301 (AlgH) family.

The protein is UPF0301 protein BTH_I1462 of Burkholderia thailandensis (strain ATCC 700388 / DSM 13276 / CCUG 48851 / CIP 106301 / E264).